A 418-amino-acid chain; its full sequence is Serine/threonine-protein kinase Sgk1 (418 aa).

The interval 50-78 (PQEPELLNENSSPPPSPSQQINLGPSSNP) is disordered. Residues 68–78 (QQINLGPSSNP) are compositionally biased toward polar residues. Positions 85–342 (FQFLKIIGKG…FMEIKNHMFF (258 aa)) constitute a Protein kinase domain. ATP-binding positions include 91–99 (IGKGSFGKV) and Lys-114. Asp-209 functions as the Proton acceptor in the catalytic mechanism. Residues 343-418 (SPINWDDLIN…SYAPPMESYL (76 aa)) enclose the AGC-kinase C-terminal domain.

This sequence belongs to the protein kinase superfamily. AGC Ser/Thr protein kinase family.

The protein resides in the cytoplasm. Its subcellular location is the nucleus. It localises to the endoplasmic reticulum. The catalysed reaction is L-seryl-[protein] + ATP = O-phospho-L-seryl-[protein] + ADP + H(+). The enzyme catalyses L-threonyl-[protein] + ATP = O-phospho-L-threonyl-[protein] + ADP + H(+). Protein kinase that may play an important role in cellular stress response. Plays an important role in activating certain potassium, sodium, and chloride channels, suggesting an involvement in the regulation of processes such as cell survival, neuronal excitability, and renal sodium excretion. The chain is Serine/threonine-protein kinase Sgk1 (sgk1) from Xenopus tropicalis (Western clawed frog).